Here is a 156-residue protein sequence, read N- to C-terminus: Hydrogenase 3 maturation protease (156 aa).

Positions 16, 62, and 90 each coordinate Ni(2+).

This sequence belongs to the peptidase A31 family. Monomer.

The catalysed reaction is This enzyme specifically removes a 32-amino acid peptide from the C-terminus of the precursor of the large subunit of E.coli hydrogenase 3 by cleavage at the C-terminal side of Arg-537.. Its function is as follows. Protease involved in the C-terminal processing of HycE, the large subunit of hydrogenase 3. This Escherichia coli O157:H7 protein is Hydrogenase 3 maturation protease (hycI).